Here is a 607-residue protein sequence, read N- to C-terminus: Albumin B (607 aa).

The signal sequence occupies residues 1 to 18; sequence MKWITLICLLISSSFIES. Positions 19–24 are excised as a propeptide; that stretch reads RILFKR. Albumin domains lie at 22-209, 210-402, and 403-600; these read FKRD…KQLM, KQSH…RFMN, and EAKE…VLIE. His30 contributes to the Cu cation binding site. Disulfide bonds link Cys80–Cys88, Cys101–Cys117, Cys116–Cys127, Cys147–Cys192, Cys191–Cys200, Cys223–Cys269, Cys268–Cys276, Cys288–Cys302, Cys301–Cys312, Cys339–Cys384, Cys383–Cys392, Cys415–Cys461, Cys460–Cys471, Cys484–Cys500, Cys499–Cys510, Cys537–Cys582, and Cys581–Cys590.

This sequence belongs to the ALB/AFP/VDB family. Plasma.

It is found in the secreted. Serum albumin, the main protein of plasma, has a good binding capacity for water, Ca(2+), Na(+), K(+), fatty acids, hormones, bilirubin and drugs. Its main function is the regulation of the colloidal osmotic pressure of blood. This is Albumin B (alb-b) from Xenopus laevis (African clawed frog).